Here is a 371-residue protein sequence, read N- to C-terminus: Outer membrane protein P2 (371 aa).

Positions 1–20 are cleaved as a signal peptide; that stretch reads MKKTLAALIVGAFAASAANA.

It belongs to the Gram-negative porin family. As to quaternary structure, homotrimer.

The protein resides in the cell outer membrane. Its function is as follows. Forms pores that allow passive diffusion of small molecules across the outer membrane. The chain is Outer membrane protein P2 (ompP2) from Haemophilus influenzae.